We begin with the raw amino-acid sequence, 480 residues long: Thiamine biosynthesis bifunctional protein ThiM/ThiE (480 aa).

The segment at 1 to 287 (MSTLPERVRE…LYVLVSGATP (287 aa)) is hydroxyethylthiazole kinase. Met-40 serves as a coordination point for 5-(2-hydroxyethyl)-4-methylthiazole. ATP contacts are provided by Arg-116 and Thr-164. Position 191 (Gly-191) interacts with 5-(2-hydroxyethyl)-4-methylthiazole. The interval 288 to 480 (PDVLEAVLQA…VRRAKGEVSA (193 aa)) is thiamine-phosphate synthase. 4-amino-2-methyl-5-(diphosphooxymethyl)pyrimidine-binding positions include 303–307 (QFREK) and Asn-335. Mg(2+) is bound by residues Asp-336 and Asp-355. Thr-374 contributes to the 4-amino-2-methyl-5-(diphosphooxymethyl)pyrimidine binding site. 400-402 (TPS) is a binding site for 2-[(2R,5Z)-2-carboxy-4-methylthiazol-5(2H)-ylidene]ethyl phosphate. Lys-403 is a 4-amino-2-methyl-5-(diphosphooxymethyl)pyrimidine binding site. Residues Gly-431 and 451–452 (IS) contribute to the 2-[(2R,5Z)-2-carboxy-4-methylthiazol-5(2H)-ylidene]ethyl phosphate site.

This sequence in the N-terminal section; belongs to the Thz kinase family. In the C-terminal section; belongs to the thiamine-phosphate synthase family. The cofactor is Mg(2+).

It catalyses the reaction 5-(2-hydroxyethyl)-4-methylthiazole + ATP = 4-methyl-5-(2-phosphooxyethyl)-thiazole + ADP + H(+). The catalysed reaction is 2-[(2R,5Z)-2-carboxy-4-methylthiazol-5(2H)-ylidene]ethyl phosphate + 4-amino-2-methyl-5-(diphosphooxymethyl)pyrimidine + 2 H(+) = thiamine phosphate + CO2 + diphosphate. The enzyme catalyses 2-(2-carboxy-4-methylthiazol-5-yl)ethyl phosphate + 4-amino-2-methyl-5-(diphosphooxymethyl)pyrimidine + 2 H(+) = thiamine phosphate + CO2 + diphosphate. It carries out the reaction 4-methyl-5-(2-phosphooxyethyl)-thiazole + 4-amino-2-methyl-5-(diphosphooxymethyl)pyrimidine + H(+) = thiamine phosphate + diphosphate. It functions in the pathway cofactor biosynthesis; thiamine diphosphate biosynthesis; 4-methyl-5-(2-phosphoethyl)-thiazole from 5-(2-hydroxyethyl)-4-methylthiazole: step 1/1. The protein operates within cofactor biosynthesis; thiamine diphosphate biosynthesis; thiamine phosphate from 4-amino-2-methyl-5-diphosphomethylpyrimidine and 4-methyl-5-(2-phosphoethyl)-thiazole: step 1/1. Condenses 4-methyl-5-(beta-hydroxyethyl)thiazole monophosphate (THZ-P) and 2-methyl-4-amino-5-hydroxymethyl pyrimidine pyrophosphate (HMP-PP) to form thiamine monophosphate (TMP). The sequence is that of Thiamine biosynthesis bifunctional protein ThiM/ThiE (thiM/thiE) from Symbiobacterium thermophilum (strain DSM 24528 / JCM 14929 / IAM 14863 / T).